We begin with the raw amino-acid sequence, 335 residues long: Methyltransferase pgmE (335 aa).

It belongs to the methyltransferase superfamily.

It functions in the pathway pigment biosynthesis. It participates in secondary metabolite biosynthesis. Functionally, methyltransferase; part of the gene cluster that mediates the biosynthesis of pleosporalin A, ascomycone A, as well as a third cryptic naphthoquinone derived pigment, all responsible for the coloration of conidia. Essential for the production of pleosporalin A, but not the 2 other final products. The pathway begins with the biosynthesis of the cyclized heptaketide 3-acetonyl-1,6,8-trihydroxy-2-naphthaldehyde by the NR-PKS pgmA. The C-6 hydroxyl group is further methylated by the O-methyltransferase pgmB to yield fusarubinaldehyde which is in turn oxidized by the cytochrome P450 monooxygenase pgmC at C-9. The C-1 hydroxyl group is then methylated spontaneously. Although pgmE, pgmD and pgmH are essential for the production of pleosporalin A, it is not the case for the 2 other final products and it remains difficult to assign a specific function to each enzyme. PgmF and pgmG seem not to be involved in pigment biosynthesis although they were regulated by the cluster-specific transcription factor pgmR. The polypeptide is Methyltransferase pgmE (Aspergillus terreus (strain NIH 2624 / FGSC A1156)).